The following is a 336-amino-acid chain: Ferredoxin--NADP reductase (336 aa).

The FAD site is built by Thr18, Glu37, Gln45, Tyr50, Val92, Phe127, Asp290, and Ser331.

This sequence belongs to the ferredoxin--NADP reductase type 2 family. As to quaternary structure, homodimer. Requires FAD as cofactor.

The catalysed reaction is 2 reduced [2Fe-2S]-[ferredoxin] + NADP(+) + H(+) = 2 oxidized [2Fe-2S]-[ferredoxin] + NADPH. The polypeptide is Ferredoxin--NADP reductase (Symbiobacterium thermophilum (strain DSM 24528 / JCM 14929 / IAM 14863 / T)).